The sequence spans 207 residues: Cyclic di-AMP synthase CdaS (207 aa).

The stretch at 13–37 (AFKGKIQVYLEQILGDASLILKTLH) forms a coiled coil. The DAC domain maps to 63-205 (SFYLQSYIEE…DGVLYPLISP (143 aa)).

The protein belongs to the adenylate cyclase family. DacB/CdaS subfamily. Forms dimers and probably also hexamers; the dimer may be active while the hexamer may not be active.

The enzyme catalyses 2 ATP = 3',3'-c-di-AMP + 2 diphosphate. Its function is as follows. One of 3 paralogous diadenylate cyclases (DAC) in this bacteria, catalyzing the condensation of 2 ATP molecules into cyclic di-AMP (c-di-AMP). Upon expression in E.coli leads to c-di-AMP synthesis. Overexpression of the hyperactive mutant (L44F) in the absence of c-di-AMP phosphodiesterase GdpP leads to growth defects in log phase (long curly cell filaments) that disappear upon sporulation; spore formation is normal, showing sporulation is insensitive to the excess c-di-AMP. In B.subtilis c-di-AMP is a second messenger that mediates growth, DNA repair and cell wall homeostasis; it is toxic when present in excess. The polypeptide is Cyclic di-AMP synthase CdaS (Bacillus subtilis (strain 168)).